A 259-amino-acid polypeptide reads, in one-letter code: Small ribosomal subunit protein eS1 (259 aa).

A compositionally biased stretch (basic residues) spans 1–18 (MAVGKNKRISKGKKGGKK). The tract at residues 1–22 (MAVGKNKRISKGKKGGKKKASD) is disordered.

This sequence belongs to the eukaryotic ribosomal protein eS1 family. Component of the small ribosomal subunit. Mature ribosomes consist of a small (40S) and a large (60S) subunit. The 40S subunit contains about 33 different proteins and 1 molecule of RNA (18S). The 60S subunit contains about 49 different proteins and 3 molecules of RNA (25S, 5.8S and 5S).

It localises to the cytoplasm. This is Small ribosomal subunit protein eS1 from Chlamydomonas reinhardtii (Chlamydomonas smithii).